The primary structure comprises 287 residues: Probable 18S rRNA (guanine-N(7))-methyltransferase (287 aa).

Residues Gly214–Phe287 form a disordered region. Positions Gly217–Ser228 are enriched in acidic residues. The segment covering Ser234 to Lys245 has biased composition (basic residues). Positions Lys253 to Phe278 are enriched in basic and acidic residues.

Belongs to the class I-like SAM-binding methyltransferase superfamily. BUD23/WBSCR22 family.

Its subcellular location is the nucleus. It localises to the nucleoplasm. It is found in the cytoplasm. The protein localises to the perinuclear region. It carries out the reaction a guanosine in 18S rRNA + S-adenosyl-L-methionine = an N(7)-methylguanosine in 18S rRNA + S-adenosyl-L-homocysteine. S-adenosyl-L-methionine-dependent methyltransferase that specifically methylates the N(7) position of a guanine in 18S rRNA. Important for biogenesis end export of the 40S ribosomal subunit independent on its methyltransferase activity. Functionally, S-adenosyl-L-methionine-dependent methyltransferase that specifically methylates the N(7) position of a guanine in 18S rRNA. Requires the methyltransferase adapter protein TRM112 for full rRNA methyltransferase activity. Involved in the pre-rRNA processing steps leading to small-subunit rRNA production independently of its RNA-modifying catalytic activity. Important for biogenesis end export of the 40S ribosomal subunit independent on its methyltransferase activity. This chain is Probable 18S rRNA (guanine-N(7))-methyltransferase, found in Dictyostelium discoideum (Social amoeba).